An 89-amino-acid chain; its full sequence is DNA/RNA-binding protein Alba 2 (89 aa).

This sequence belongs to the histone-like Alba family. In terms of assembly, forms homodimers and homotetramers. Interacts with Alba 1.

Its subcellular location is the cytoplasm. It localises to the chromosome. In terms of biological role, binds double-stranded DNA tightly but without sequence specificity. Involved in DNA compaction. The chain is DNA/RNA-binding protein Alba 2 from Archaeoglobus fulgidus (strain ATCC 49558 / DSM 4304 / JCM 9628 / NBRC 100126 / VC-16).